A 242-amino-acid polypeptide reads, in one-letter code: Neuromodulin (242 aa).

The tract at residues 1–242 (MLCCMRRTKQ…EEREADQEHA (242 aa)) is disordered. Residues C3 and C4 are each lipidated (S-palmitoyl cysteine). Over residues 9-32 (KQVEKNDEDQKIEQDGIKPEDKAH) the composition is skewed to basic and acidic residues. The 30-residue stretch at 31–60 (AHKAATKIQASFRGHITRKKLKGEKKGDAQ) folds into the IQ domain. S41 is subject to Phosphoserine; by PHK and PKC. 2 stretches are compositionally biased toward basic and acidic residues: residues 66 to 84 (GNEK…KEGE) and 98 to 117 (KAEE…KGEG). A compositionally biased stretch (polar residues) spans 142–157 (ETESATKASTDNSPSS). Residues S154, S156, and S157 each carry the phosphoserine modification. A compositionally biased stretch (basic and acidic residues) spans 158-170 (KAEDAPAKEEPKQ). The segment covering 171–203 (ADVPAAVTAAAAATTPAAEDAAAKATAQPPTDA) has biased composition (low complexity). Phosphothreonine is present on T185. Residues S206 and S207 each carry the phosphoserine; by CK2 modification. Over residues 209–242 (AEEKIEAVDETKPKESARQDEGKGEEREADQEHA) the composition is skewed to basic and acidic residues.

It belongs to the neuromodulin family. Identified in a complex containing FGFR4, NCAM1, CDH2, PLCG1, FRS2, SRC, SHC1, GAP43 and CTTN. Interacts (via IQ domain) with calmodulin. Binds calmodulin with a greater affinity in the absence of Ca(2+) than in its presence. In terms of processing, phosphorylated. Phosphorylation of this protein by a protein kinase C is specifically correlated with certain forms of synaptic plasticity. Palmitoylated by ZDHHC3. Palmitoylation is regulated by ARF6 and is essential for plasma membrane association and axonal and dendritic filopodia induction. Deacylated by LYPLA2.

The protein localises to the cell membrane. It localises to the cell projection. It is found in the growth cone membrane. Its subcellular location is the synapse. The protein resides in the filopodium membrane. The protein localises to the perikaryon. It localises to the dendrite. It is found in the axon. Its subcellular location is the cytoplasm. This protein is associated with nerve growth. It is a major component of the motile 'growth cones' that form the tips of elongating axons. Plays a role in axonal and dendritic filopodia induction. The sequence is that of Neuromodulin (GAP43) from Felis catus (Cat).